The chain runs to 372 residues: Ribosomal RNA small subunit methyltransferase H (372 aa).

Residues 44-46, aspartate 63, leucine 97, aspartate 111, and glutamine 118 each bind S-adenosyl-L-methionine; that span reads GGH. A compositionally biased stretch (basic and acidic residues) spans 315–334; that stretch reads RAAERLDPTAEQRRRTDRER. Residues 315–372 are disordered; it reads RAAERLDPTAEQRRRTDRERYRRRVRAMHQPGTGSAVRRPTPGDDGTGTDEEGEGHDS. Residues 361–372 show a composition bias toward acidic residues; it reads TGTDEEGEGHDS.

Belongs to the methyltransferase superfamily. RsmH family.

Its subcellular location is the cytoplasm. It carries out the reaction cytidine(1402) in 16S rRNA + S-adenosyl-L-methionine = N(4)-methylcytidine(1402) in 16S rRNA + S-adenosyl-L-homocysteine + H(+). Its function is as follows. Specifically methylates the N4 position of cytidine in position 1402 (C1402) of 16S rRNA. The sequence is that of Ribosomal RNA small subunit methyltransferase H from Salinispora arenicola (strain CNS-205).